A 360-amino-acid polypeptide reads, in one-letter code: DNA integrity scanning protein DisA (360 aa).

A DAC domain is found at 9 to 147; that stretch reads DNDLMDILNI…NNIKYVLRDS (139 aa). Residues G76, L94, and 107–111 contribute to the ATP site; that span reads TRHRT.

Belongs to the DisA family. Homooctamer. The cofactor is Mg(2+).

The catalysed reaction is 2 ATP = 3',3'-c-di-AMP + 2 diphosphate. Participates in a DNA-damage check-point that is active prior to asymmetric division when DNA is damaged. DisA forms globular foci that rapidly scan along the chromosomes during sporulation, searching for lesions. When a lesion is present, DisA pauses at the lesion site. This triggers a cellular response that culminates in a temporary block in sporulation initiation. Its function is as follows. Also has diadenylate cyclase activity, catalyzing the condensation of 2 ATP molecules into cyclic di-AMP (c-di-AMP). c-di-AMP acts as a signaling molecule that couples DNA integrity with progression of sporulation. The rise in c-di-AMP level generated by DisA while scanning the chromosome, operates as a positive signal that advances sporulation; upon encountering a lesion, the DisA focus arrests at the damaged site and halts c-di-AMP synthesis. This Clostridium tetani (strain Massachusetts / E88) protein is DNA integrity scanning protein DisA.